The sequence spans 272 residues: Shikimate dehydrogenase (NADP(+)) (272 aa).

Residues 14 to 16 (SKS) and T61 contribute to the shikimate site. K65 (proton acceptor) is an active-site residue. N86 and D102 together coordinate shikimate. NADP(+) is bound by residues 126–130 (GAGGA), 149–154 (NRTFSK), S189, and M213. Y215 contacts shikimate. Residue G238 coordinates NADP(+).

The protein belongs to the shikimate dehydrogenase family. As to quaternary structure, homodimer.

The enzyme catalyses shikimate + NADP(+) = 3-dehydroshikimate + NADPH + H(+). It participates in metabolic intermediate biosynthesis; chorismate biosynthesis; chorismate from D-erythrose 4-phosphate and phosphoenolpyruvate: step 4/7. Its function is as follows. Involved in the biosynthesis of the chorismate, which leads to the biosynthesis of aromatic amino acids. Catalyzes the reversible NADPH linked reduction of 3-dehydroshikimate (DHSA) to yield shikimate (SA). This Haemophilus influenzae (strain ATCC 51907 / DSM 11121 / KW20 / Rd) protein is Shikimate dehydrogenase (NADP(+)).